We begin with the raw amino-acid sequence, 67 residues long: MAQGTVKWFNAEKGFGFITPDDSDGDVFVHYSEIQTGGFKTLDENARVQFEIGQGAKGPQATGVTLV.

One can recognise a CSD domain in the interval 4-64; that stretch reads GTVKWFNAEK…GAKGPQATGV (61 aa).

It localises to the cytoplasm. The polypeptide is Cold shock protein (csp) (Arthrobacter globiformis).